The following is a 432-amino-acid chain: Peptidase B (432 aa).

Mn(2+) is bound by residues lysine 196 and aspartate 201. Residue lysine 208 is part of the active site. The Mn(2+) site is built by aspartate 219, aspartate 278, and glutamate 280. Residue arginine 282 is part of the active site.

This sequence belongs to the peptidase M17 family. As to quaternary structure, homohexamer. Mn(2+) is required as a cofactor.

It is found in the cytoplasm. It carries out the reaction Release of an N-terminal amino acid, Xaa, from a peptide or arylamide. Xaa is preferably Glu or Asp but may be other amino acids, including Leu, Met, His, Cys and Gln.. Its function is as follows. Probably plays an important role in intracellular peptide degradation. This Yersinia pseudotuberculosis serotype O:1b (strain IP 31758) protein is Peptidase B.